The chain runs to 738 residues: Platelet endothelial cell adhesion molecule (738 aa).

The signal sequence occupies residues 1-27; sequence MQPRWAQGATMWLGVLLTLLLCSSLEG. Topologically, residues 28–601 are extracellular; sequence QENSFTINSV…VRVILAPWKK (574 aa). Ig-like C2-type domains are found at residues 35 to 121, 145 to 233, and 236 to 315; these read NSVD…KTTA, GGIV…TESF, and PKFH…SKVS. N52, N84, and N151 each carry an N-linked (GlcNAc...) asparagine glycan. A disulfide bond links C57 and C109. Cystine bridges form between C152-C206 and C256-C304. N-linked (GlcNAc...) asparagine glycans are attached at residues N301, N320, N344, N356, N453, and N551. Ig-like C2-type domains lie at 328–401, 424–493, and 499–591; these read PELE…NTVQ, GQTI…EVLR, and PVDE…KILT. 3 disulfides stabilise this stretch: C347/C386, C431/C476, and C523/C572. The helical transmembrane segment at 602-620 threads the bilayer; sequence GLIAVVIIGVIIALLIIAA. The Cytoplasmic portion of the chain corresponds to 621 to 738; it reads KCYFLRKAKA…SRTEGSLDGT (118 aa). The S-palmitoyl cysteine moiety is linked to residue C622. Residues 658–715 form a disordered region; it reads EANSHYGHNDDVRNHAMKPINDNKEPLNSDVQYTEVQVSSAESHKDLGKKDTETVYSE. Polar residues predominate over residues 686 to 698; the sequence is SDVQYTEVQVSSA. 2 short sequence motifs (ITIM motif) span residues 688 to 693 and 711 to 716; these read VQYTEV and TVYSEV. Y690 and Y713 each carry phosphotyrosine; by FER. A compositionally biased stretch (basic and acidic residues) spans 699-715; it reads ESHKDLGKKDTETVYSE. Residues 709-729 are membrane-bound segment which detaches upon phosphorylation; it reads TETVYSEVRKAVPDAVESRYS. A may play a role in cytoprotective signaling region spans residues 721–738; the sequence is PDAVESRYSRTEGSLDGT. Residues S729 and S734 each carry the phosphoserine modification.

Trans-homodimer (via Ig-like C2-type 1 and Ig-like C2-type 2 domains); trans-homodimerization is required for cell-cell interaction. Forms a complex with BDKRB2 and GNAQ. Interacts with BDKRB2 and GNAQ. Interacts with PTPN11; Tyr-713 is critical for PTPN11 recruitment. Interacts with FER. Interacts (via Ig-like C2-type domain 6) with CD177; the interaction is Ca(2+)-dependent; the interaction is direct. Phosphorylated on Ser and Tyr residues after cellular activation by src kinases. Upon activation, phosphorylated on Ser-729 which probably initiates the dissociation of the membrane-interaction segment (residues 709-729) from the cell membrane allowing the sequential phosphorylation of Tyr-713 and Tyr-690. Constitutively phosphorylated on Ser-734 in resting platelets. Phosphorylated on tyrosine residues by FER and FES in response to FCER1 activation. In endothelial cells Fyn mediates mechanical-force (stretch or pull) induced tyrosine phosphorylation. In terms of processing, palmitoylation by ZDHHC21 is necessary for cell surface expression in endothelial cells and enrichment in membrane rafts. In terms of tissue distribution, expressed on platelets and leukocytes and is primarily concentrated at the borders between endothelial cells. Expressed in human umbilical vein endothelial cells (HUVECs) (at protein level). Expressed on neutrophils (at protein level). Isoform Long predominates in all tissues examined. Isoform Delta12 is detected only in trachea. Isoform Delta14-15 is only detected in lung. Isoform Delta14 is detected in all tissues examined with the strongest expression in heart. Isoform Delta15 is expressed in brain, testis, ovary, cell surface of platelets, human umbilical vein endothelial cells (HUVECs), Jurkat T-cell leukemia, human erythroleukemia (HEL) and U-937 histiocytic lymphoma cell lines (at protein level).

It localises to the cell membrane. The protein localises to the membrane raft. The protein resides in the cell junction. Cell adhesion molecule which is required for leukocyte transendothelial migration (TEM) under most inflammatory conditions. Tyr-690 plays a critical role in TEM and is required for efficient trafficking of PECAM1 to and from the lateral border recycling compartment (LBRC) and is also essential for the LBRC membrane to be targeted around migrating leukocytes. Trans-homophilic interaction may play a role in endothelial cell-cell adhesion via cell junctions. Heterophilic interaction with CD177 plays a role in transendothelial migration of neutrophils. Homophilic ligation of PECAM1 prevents macrophage-mediated phagocytosis of neighboring viable leukocytes by transmitting a detachment signal. Promotes macrophage-mediated phagocytosis of apoptotic leukocytes by tethering them to the phagocytic cells; PECAM1-mediated detachment signal appears to be disabled in apoptotic leukocytes. Modulates bradykinin receptor BDKRB2 activation. Regulates bradykinin- and hyperosmotic shock-induced ERK1/2 activation in endothelial cells. Induces susceptibility to atherosclerosis. Functionally, does not protect against apoptosis. The sequence is that of Platelet endothelial cell adhesion molecule (PECAM1) from Homo sapiens (Human).